Reading from the N-terminus, the 362-residue chain is Phosphoserine aminotransferase (362 aa).

R43 contacts L-glutamate. Residues A77–R78, W103, T153, D173, and Q196 each bind pyridoxal 5'-phosphate. K197 is modified (N6-(pyridoxal phosphate)lysine).

The protein belongs to the class-V pyridoxal-phosphate-dependent aminotransferase family. SerC subfamily. Homodimer. It depends on pyridoxal 5'-phosphate as a cofactor.

The protein localises to the cytoplasm. It carries out the reaction O-phospho-L-serine + 2-oxoglutarate = 3-phosphooxypyruvate + L-glutamate. It catalyses the reaction 4-(phosphooxy)-L-threonine + 2-oxoglutarate = (R)-3-hydroxy-2-oxo-4-phosphooxybutanoate + L-glutamate. The protein operates within amino-acid biosynthesis; L-serine biosynthesis; L-serine from 3-phospho-D-glycerate: step 2/3. Its pathway is cofactor biosynthesis; pyridoxine 5'-phosphate biosynthesis; pyridoxine 5'-phosphate from D-erythrose 4-phosphate: step 3/5. Its function is as follows. Catalyzes the reversible conversion of 3-phosphohydroxypyruvate to phosphoserine and of 3-hydroxy-2-oxo-4-phosphonooxybutanoate to phosphohydroxythreonine. The chain is Phosphoserine aminotransferase from Legionella pneumophila subsp. pneumophila (strain Philadelphia 1 / ATCC 33152 / DSM 7513).